The following is a 160-amino-acid chain: Eukaryotic translation initiation factor 5A (160 aa).

Positions 1-10 are enriched in basic and acidic residues; the sequence is MSDDDHHFES. Positions 1–23 are disordered; sequence MSDDDHHFESSADAGASKTYPQQ. Lys-52 carries the hypusine modification.

Belongs to the eIF-5A family. Post-translationally, lys-52 undergoes hypusination, a unique post-translational modification that consists in the addition of a butylamino group from spermidine to lysine side chain, leading to the formation of the unusual amino acid hypusine. eIF-5As are the only known proteins to undergo this modification, which is essential for their function.

In terms of biological role, translation factor that promotes translation elongation and termination, particularly upon ribosome stalling at specific amino acid sequence contexts. Binds between the exit (E) and peptidyl (P) site of the ribosome and promotes rescue of stalled ribosome: specifically required for efficient translation of polyproline-containing peptides as well as other motifs that stall the ribosome. Acts as a ribosome quality control (RQC) cofactor by joining the RQC complex to facilitate peptidyl transfer during CAT tailing step. This chain is Eukaryotic translation initiation factor 5A, found in Dianthus caryophyllus (Carnation).